Consider the following 291-residue polypeptide: Stomatin-like protein 3 (291 aa).

S7 carries the phosphoserine modification. Residues 29–49 (WILFSLSFLLVIITFPISIWM) form a helical; Signal-anchor for type III membrane protein membrane-spanning segment. Topologically, residues 50 to 291 (CLKIIKEYER…DNHKKLPNKA (242 aa)) are cytoplasmic. Position 241 is a phosphoserine (S241).

The protein belongs to the band 7/mec-2 family. Homodimer. Interacts with PIEZO1 and PIEZO2.

The protein resides in the cell membrane. Required for the function of many mechanoreceptors. Modulate mechanotransduction channels and acid-sensing ion channels (ASIC) proteins. Potentiates PIEZO1 and PIEZO2 function by increasing their sensitivity to mechanical stimulations. This Homo sapiens (Human) protein is Stomatin-like protein 3 (STOML3).